The following is a 170-amino-acid chain: Adenine phosphoribosyltransferase (170 aa).

Belongs to the purine/pyrimidine phosphoribosyltransferase family. As to quaternary structure, homodimer.

The protein resides in the cytoplasm. It catalyses the reaction AMP + diphosphate = 5-phospho-alpha-D-ribose 1-diphosphate + adenine. The protein operates within purine metabolism; AMP biosynthesis via salvage pathway; AMP from adenine: step 1/1. Catalyzes a salvage reaction resulting in the formation of AMP, that is energically less costly than de novo synthesis. The polypeptide is Adenine phosphoribosyltransferase (Thermosipho africanus (strain TCF52B)).